A 403-amino-acid polypeptide reads, in one-letter code: Na(+)/H(+) antiporter NhaA (403 aa).

Helical transmembrane passes span 23 to 43 (AFFL…PWAA), 66 to 86 (VAAW…ILEI), 101 to 121 (VALP…TYLL), 132 to 152 (GWAI…LALG), 161 to 181 (AWLM…IALF), 184 to 204 (GSMY…LIGA), 219 to 239 (GILL…AGVI), 257 to 277 (WVSS…FGFM), 297 to 317 (LGIM…ATLL), 333 to 353 (GMLF…LFVA), and 363 to 383 (IAPA…TGWF).

Belongs to the NhaA Na(+)/H(+) (TC 2.A.33) antiporter family.

It localises to the cell inner membrane. It catalyses the reaction Na(+)(in) + 2 H(+)(out) = Na(+)(out) + 2 H(+)(in). Its function is as follows. Na(+)/H(+) antiporter that extrudes sodium in exchange for external protons. The protein is Na(+)/H(+) antiporter NhaA of Gluconobacter oxydans (strain 621H) (Gluconobacter suboxydans).